The chain runs to 1215 residues: Zinc finger SWIM domain-containing protein 6 (1215 aa).

2 disordered regions span residues 1–46 (MAER…RPGP) and 133–161 (AAGGPGDDSGGGGGAGGGGGGGSSSSPAA). Gly residues-rich tracts occupy residues 18–38 (PGGGGGGGGSSGGGGGAGGGY) and 133–155 (AAGGPGDDSGGGGGAGGGGGGGS). The segment at 246–283 (CNVAISFDRCKITSVTCSCGNKDIFYCAHVVALSLYRI) adopts an SWIM-type zinc-finger fold.

In terms of biological role, involved in nervous system development, important for striatal morphology and motor regulation. The protein is Zinc finger SWIM domain-containing protein 6 of Homo sapiens (Human).